A 321-amino-acid polypeptide reads, in one-letter code: L-carnitine dehydrogenase (321 aa).

14 to 19 serves as a coordination point for NAD(+); the sequence is GAGVIG.

Belongs to the 3-hydroxyacyl-CoA dehydrogenase family. L-carnitine dehydrogenase subfamily. In terms of assembly, homodimer.

Its subcellular location is the cytoplasm. It carries out the reaction carnitine + NAD(+) = 3-dehydrocarnitine + NADH + H(+). The protein operates within amine and polyamine metabolism; carnitine metabolism. Functionally, catalyzes the NAD(+)-dependent oxidation of L-carnitine to 3-dehydrocarnitine. The polypeptide is L-carnitine dehydrogenase (Burkholderia mallei (strain ATCC 23344)).